The following is a 992-amino-acid chain: Translation initiation factor IF-2 (992 aa).

Disordered stretches follow at residues 154–173 and 338–399; these read RRLR…EREA and AAPG…RPES. The 170-residue stretch at 492-661 folds into the tr-type G domain; that stretch reads PRAPVVTVMG…LLQAEVLELK (170 aa). The tract at residues 501 to 508 is G1; sequence GHVDHGKT. 501–508 contributes to the GTP binding site; sequence GHVDHGKT. A G2 region spans residues 526 to 530; that stretch reads GITQH. The interval 547–550 is G3; the sequence is DTPG. Residues 547–551 and 601–604 each bind GTP; these read DTPGH and NKID. The G4 stretch occupies residues 601–604; the sequence is NKID. The segment at 637 to 639 is G5; the sequence is SAH.

Belongs to the TRAFAC class translation factor GTPase superfamily. Classic translation factor GTPase family. IF-2 subfamily.

The protein resides in the cytoplasm. In terms of biological role, one of the essential components for the initiation of protein synthesis. Protects formylmethionyl-tRNA from spontaneous hydrolysis and promotes its binding to the 30S ribosomal subunits. Also involved in the hydrolysis of GTP during the formation of the 70S ribosomal complex. This chain is Translation initiation factor IF-2, found in Polaromonas naphthalenivorans (strain CJ2).